The sequence spans 445 residues: Rab GDP dissociation inhibitor beta (445 aa).

Met1 carries the N-acetylmethionine modification. The residue at position 57 (Lys57) is an N6-succinyllysine. Ser61 is subject to Phosphoserine. Lys112 carries the post-translational modification N6-acetyllysine. A Phosphoserine modification is found at Ser130. Lys269 is modified (N6-acetyllysine). Ser382 is subject to Phosphoserine.

Belongs to the Rab GDI family. As to quaternary structure, interacts with RHOH. Interacts with the GDP-bound inactive forms of RAB3A, RAB3B, RAB3C, RAB5A, RAB5B, RAB5C, RAB8A, RAB8B, RAB10, RAB12, RAB35, and RAB43; binds RAB3D to a lesser extent. Interacts with DZIP1; this interaction negatively regulates the interaction of GDI2 with GDP-bound RAB8A. Ubiquitous.

It is found in the cytoplasm. The protein localises to the membrane. The protein resides in the golgi apparatus. It localises to the trans-Golgi network. Its function is as follows. GDP-dissociation inhibitor preventing the GDP to GTP exchange of most Rab proteins. By keeping these small GTPases in their inactive GDP-bound form regulates intracellular membrane trafficking. Negatively regulates protein transport to the cilium and ciliogenesis through the inhibition of RAB8A. The chain is Rab GDP dissociation inhibitor beta (GDI2) from Homo sapiens (Human).